The sequence spans 236 residues: Lipoprotein NlpE (236 aa).

The first 20 residues, 1 to 20 (MVKKAIVTAMAVISLFTLMG), serve as a signal peptide directing secretion. A lipid anchor (N-palmitoyl cysteine) is attached at cysteine 21. Cysteine 21 carries S-diacylglycerol cysteine lipidation. Residues 21–100 (CNNRAEVDTL…WARTADKLVL (80 aa)) form an N-terminal domain region. The Periplasmic segment spans residues 21 to 236 (CNNRAEVDTL…PNQDCSSLGQ (216 aa)). A CXXC motif is present at residues 51–54 (CADC). Positions 126–236 (PIESQFNYTL…PNQDCSSLGQ (111 aa)) are C-terminal domain. Residues 144 to 156 (MTPMTLRGMYFYM) form a could contain a copper-binding motif region. Residues cysteine 165 and cysteine 231 are joined by a disulfide bond.

Probably exists as a monomer in vivo, can however form homodimers which swap domains. Post-translationally, palmitoylated. Seems to only form a disulfide bond between Cys-165 and Cys-231. The 2 other cysteine residues may however be chemically active.

The protein resides in the cell outer membrane. In terms of biological role, involved in copper homeostasis, could be involved in both copper efflux and the delivery of copper to copper-dependent enzymes. Required for efficient binding of stationary phase cells to hydrophobic surfaces, part of the process of biofilm formation. Functions during envelope stress responses; when overproduced induces degP through the activation of the two-component envelope stress response system CpxA/CpxR. DegP induction seems to require membrane anchoring of this protein. Structural changes and/or interaction of the CXXC motif with its environment may lead to activation of the Cpx stress response. This Escherichia coli (strain K12) protein is Lipoprotein NlpE.